The chain runs to 388 residues: Phosphopentomutase (388 aa).

Asp11, Asp283, His288, Asp324, His325, and His336 together coordinate Mn(2+).

This sequence belongs to the phosphopentomutase family. The cofactor is Mn(2+).

Its subcellular location is the cytoplasm. The catalysed reaction is 2-deoxy-alpha-D-ribose 1-phosphate = 2-deoxy-D-ribose 5-phosphate. It carries out the reaction alpha-D-ribose 1-phosphate = D-ribose 5-phosphate. It participates in carbohydrate degradation; 2-deoxy-D-ribose 1-phosphate degradation; D-glyceraldehyde 3-phosphate and acetaldehyde from 2-deoxy-alpha-D-ribose 1-phosphate: step 1/2. In terms of biological role, isomerase that catalyzes the conversion of deoxy-ribose 1-phosphate (dRib-1-P) and ribose 1-phosphate (Rib-1-P) to deoxy-ribose 5-phosphate (dRib-5-P) and ribose 5-phosphate (Rib-5-P), respectively. The chain is Phosphopentomutase from Anaeromyxobacter sp. (strain K).